The sequence spans 194 residues: Surfactant protein C (194 aa).

The tract at residues 1-21 is disordered; it reads MDMGSKEVLMESPPDYSTGPR. The propeptide occupies 1–23; it reads MDMGSKEVLMESPPDYSTGPRSQ. S-palmitoyl cysteine attachment occurs at residues cysteine 28 and cysteine 29. Positions 59 to 194 are excised as a propeptide; the sequence is HMSQKHTEMV…LCGELPLYYI (136 aa). One can recognise a BRICHOS domain in the interval 95 to 194; the sequence is FSIGSTGIVL…LCGELPLYYI (100 aa). Cysteine 122 and cysteine 186 form a disulfide bridge. The interval 149-170 is disordered; it reads SSTPTSKLGQEEGHSAGSDSDS.

Its subcellular location is the secreted. It is found in the extracellular space. The protein resides in the surface film. Pulmonary surfactant associated proteins promote alveolar stability by lowering the surface tension at the air-liquid interface in the peripheral air spaces. This chain is Surfactant protein C, found in Rattus norvegicus (Rat).